We begin with the raw amino-acid sequence, 227 residues long: Putative N-acetylmannosamine-6-phosphate 2-epimerase (227 aa).

This sequence belongs to the NanE family.

It carries out the reaction an N-acyl-D-glucosamine 6-phosphate = an N-acyl-D-mannosamine 6-phosphate. It participates in amino-sugar metabolism; N-acetylneuraminate degradation; D-fructose 6-phosphate from N-acetylneuraminate: step 3/5. In terms of biological role, converts N-acetylmannosamine-6-phosphate (ManNAc-6-P) to N-acetylglucosamine-6-phosphate (GlcNAc-6-P). The protein is Putative N-acetylmannosamine-6-phosphate 2-epimerase of Shouchella clausii (strain KSM-K16) (Alkalihalobacillus clausii).